We begin with the raw amino-acid sequence, 721 residues long: DNA ligase (721 aa).

Residues 42-46 (DAEYD), 91-92 (SL), and glutamate 125 each bind NAD(+). Catalysis depends on lysine 127, which acts as the N6-AMP-lysine intermediate. The NAD(+) site is built by arginine 148, glutamate 184, lysine 300, and lysine 324. Positions 430, 433, 448, and 454 each coordinate Zn(2+). Residues 642-721 (STGSPVEGKT…DAWFTLVGEE (80 aa)) enclose the BRCT domain.

Belongs to the NAD-dependent DNA ligase family. LigA subfamily. The cofactor is Mg(2+). Requires Mn(2+) as cofactor.

It carries out the reaction NAD(+) + (deoxyribonucleotide)n-3'-hydroxyl + 5'-phospho-(deoxyribonucleotide)m = (deoxyribonucleotide)n+m + AMP + beta-nicotinamide D-nucleotide.. DNA ligase that catalyzes the formation of phosphodiester linkages between 5'-phosphoryl and 3'-hydroxyl groups in double-stranded DNA using NAD as a coenzyme and as the energy source for the reaction. It is essential for DNA replication and repair of damaged DNA. The sequence is that of DNA ligase from Brucella anthropi (strain ATCC 49188 / DSM 6882 / CCUG 24695 / JCM 21032 / LMG 3331 / NBRC 15819 / NCTC 12168 / Alc 37) (Ochrobactrum anthropi).